We begin with the raw amino-acid sequence, 143 residues long: Submaxillary gland androgen-regulated protein 2, isoform gamma (143 aa).

Positions 1-22 (MKALYMVFVLWVLIGCFLSSEC) are cleaved as a signal peptide. The segment at 28–50 (GQHDPTRPLSPSNPSSHFYPQPD) is disordered. Residues 36 to 45 (LSPSNPSSHF) show a composition bias toward polar residues.

The protein resides in the secreted. May play a role in protection or detoxification. The sequence is that of Submaxillary gland androgen-regulated protein 2, isoform gamma (Smr2) from Mus musculus (Mouse).